We begin with the raw amino-acid sequence, 320 residues long: UV DNA damage endonuclease (320 aa).

Belongs to the uve1/UvsE family.

Functionally, component in a DNA repair pathway. Removal of UV LIGHT damaged nucleotides. Recognizes pyrimidine dimers and cleave a phosphodiester bond immediately 5' to the lesion. The chain is UV DNA damage endonuclease from Bacillus velezensis (strain DSM 23117 / BGSC 10A6 / LMG 26770 / FZB42) (Bacillus amyloliquefaciens subsp. plantarum).